Here is a 430-residue protein sequence, read N- to C-terminus: Serine--tRNA ligase (430 aa).

L-serine is bound at residue 236 to 238 (TAE). 267–269 (RSE) contributes to the ATP binding site. Position 290 (Glu-290) interacts with L-serine. An ATP-binding site is contributed by 354–357 (EISS). Residue Ser-390 coordinates L-serine.

The protein belongs to the class-II aminoacyl-tRNA synthetase family. Type-1 seryl-tRNA synthetase subfamily. As to quaternary structure, homodimer. The tRNA molecule binds across the dimer.

The protein localises to the cytoplasm. It carries out the reaction tRNA(Ser) + L-serine + ATP = L-seryl-tRNA(Ser) + AMP + diphosphate + H(+). It catalyses the reaction tRNA(Sec) + L-serine + ATP = L-seryl-tRNA(Sec) + AMP + diphosphate + H(+). It participates in aminoacyl-tRNA biosynthesis; selenocysteinyl-tRNA(Sec) biosynthesis; L-seryl-tRNA(Sec) from L-serine and tRNA(Sec): step 1/1. Catalyzes the attachment of serine to tRNA(Ser). Is also able to aminoacylate tRNA(Sec) with serine, to form the misacylated tRNA L-seryl-tRNA(Sec), which will be further converted into selenocysteinyl-tRNA(Sec). This Idiomarina loihiensis (strain ATCC BAA-735 / DSM 15497 / L2-TR) protein is Serine--tRNA ligase.